The chain runs to 484 residues: UDP-N-acetylmuramoyl-L-alanyl-D-glutamate--2,6-diaminopimelate ligase (484 aa).

Residue Ser29 participates in UDP-N-acetyl-alpha-D-muramoyl-L-alanyl-D-glutamate binding. Position 108–114 (108–114) interacts with ATP; sequence GTSGKTS. UDP-N-acetyl-alpha-D-muramoyl-L-alanyl-D-glutamate-binding positions include 150–151, Ser177, Gln183, and Arg185; that span reads TT. Position 217 is an N6-carboxylysine (Lys217). Residues Arg381, 405 to 408, Gly453, and Glu457 contribute to the meso-2,6-diaminopimelate site; that span reads DNPR. The short motif at 405–408 is the Meso-diaminopimelate recognition motif element; the sequence is DNPR.

Belongs to the MurCDEF family. MurE subfamily. Requires Mg(2+) as cofactor. In terms of processing, carboxylation is probably crucial for Mg(2+) binding and, consequently, for the gamma-phosphate positioning of ATP.

It localises to the cytoplasm. It catalyses the reaction UDP-N-acetyl-alpha-D-muramoyl-L-alanyl-D-glutamate + meso-2,6-diaminopimelate + ATP = UDP-N-acetyl-alpha-D-muramoyl-L-alanyl-gamma-D-glutamyl-meso-2,6-diaminopimelate + ADP + phosphate + H(+). It participates in cell wall biogenesis; peptidoglycan biosynthesis. In terms of biological role, catalyzes the addition of meso-diaminopimelic acid to the nucleotide precursor UDP-N-acetylmuramoyl-L-alanyl-D-glutamate (UMAG) in the biosynthesis of bacterial cell-wall peptidoglycan. This chain is UDP-N-acetylmuramoyl-L-alanyl-D-glutamate--2,6-diaminopimelate ligase, found in Mesorhizobium japonicum (strain LMG 29417 / CECT 9101 / MAFF 303099) (Mesorhizobium loti (strain MAFF 303099)).